The primary structure comprises 264 residues: Protein Saci_1508 (264 aa).

The protein belongs to the CinA family.

The sequence is that of Protein Saci_1508 from Sulfolobus acidocaldarius (strain ATCC 33909 / DSM 639 / JCM 8929 / NBRC 15157 / NCIMB 11770).